A 726-amino-acid chain; its full sequence is Sister chromatid cohesion protein SCC4 (726 aa).

TPR repeat units follow at residues 7–40 (AEGL…QISF), 88–121 (FQNY…ASSV), 132–165 (CNFN…ASHI), 229–262 (RLRL…IQQL), 443–477 (PTIL…CIEA), 531–564 (ASIL…AHNH), and 572–605 (AQYL…AKKL). Residues 697-726 (SVGIEGPSPAPSSSRLVGLDTGKRWGKRRM) are disordered.

Belongs to the SCC4/mau-2 family. In terms of assembly, interacts with SCC2 to form the cohesin loading complex. In terms of tissue distribution, expressed ubiquitously.

It localises to the nucleus. The protein localises to the cytoplasm. In terms of biological role, essential protein required for cell fate determination during embryogenesis. Involved in sister chromatid cohesion. Forms a complex with SCC2, which is required for the association of the cohesin complex with chromosomes. The protein is Sister chromatid cohesion protein SCC4 of Arabidopsis thaliana (Mouse-ear cress).